The chain runs to 1117 residues: MDYFGMLEEKTKELYAIAREARKQGKDLELEPEIPLAKDLAERVEGLVGPEGVAKRIKELEKSMSREEVAFQIAKEIATKDDVEGQPNDYEVQEANADSAIRTALAILTEGVVAAPLEGIAKVKIKDNSDGTKCFGVYFAGPIRSAGGTAAALAVLLGDYIRMSQGLDRYKPTDDEIERYVEEVELYESEVTNLQYSPTPDEVRLAIRGIPVEVTGEQTDPVEVQNRDLPRVETNNLRGGALLAVAEGVIQKSRKIVKYAKTLKIDGWDWLEYFTAPKSTKEEEKKKEESSENKPKKKAKYMEDIIGGRPVMSYPGAKGGFRLRYGRTRDSGLASMAIHPATMEIVEFLAIGTQMKIEKPGKGNCVVPCDSIEGPIVKLKNGDVIQVNDVSKAISIRRDVNEIIFLGDMLVAFGEYLRGNIPLDVSAWCEEWWAQEIEASEYFKETHDTFGIDFNENMELNALLKLDIDAKKAFDIAKKTNTPLHPKFTFYYNDVTKEELNDLHNYLYSLIDSPEDVFKSDMNRIPIDYHKRIIEVLGIPHHVNNKSLIMSNDNLYTLMSVLNKSLSPDEDMETIEAVNMISPVSIKSKAPTYIGGRVGRPEKTKERLMKPAPHSLFPIGNYAGNIRNIVEAAKKGTIKVTLAKCKCTNPDCKVSSFKALCPVCGSRTELESSAAKNIKLDKLLMDAFENVNVRRLDEVKGVKGLISEDKYPEPLEKGILRARNDVFTYRDGTIRHDSTDLPLTHFIPREVGVPYEKILEMGYTEDIYGKPITNDNQIIEIKIQDIVVSESCGDYLLKVSKFIDDLLIRYYHMEPFYNAENRVDLVGHLIAGLAPHTSAGVLGRIVGFTKASCCYAHPYFHSAKRRNCDSDEDAVMLLLDALLNFGKTYLPSTRGGSMDAPLVLSIRIDPEEIDDESHNIDCMKRIPLEIYHKTEEGGVKPSDVNDLVDNVESRLGTDNQYHGLMYSHPTSSIHAGPKICLYKTLQTMTDKVESQIALAELLRAVDQKGVVEGVLNSHFLPDMAGNIRAFSRQKVRCTKCGAKYRRIPLSGECTCGNNLILSISKGSVLKYLDISKDLSHRYPINPYVVERIEILETGINSLFESDKSKQSSLDAFF.

Residues 279 to 294 (STKEEEKKKEESSENK) show a composition bias toward basic and acidic residues. Positions 279-299 (STKEEEKKKEESSENKPKKKA) are disordered.

It belongs to the archaeal DNA polymerase II family. In terms of assembly, heterodimer of a large subunit and a small subunit.

The enzyme catalyses DNA(n) + a 2'-deoxyribonucleoside 5'-triphosphate = DNA(n+1) + diphosphate. It catalyses the reaction Exonucleolytic cleavage in the 3'- to 5'-direction to yield nucleoside 5'-phosphates.. In terms of biological role, possesses two activities: a DNA synthesis (polymerase) and an exonucleolytic activity that degrades single-stranded DNA in the 3'- to 5'-direction. Has a template-primer preference which is characteristic of a replicative DNA polymerase. This Methanosphaera stadtmanae (strain ATCC 43021 / DSM 3091 / JCM 11832 / MCB-3) protein is DNA polymerase II large subunit.